We begin with the raw amino-acid sequence, 303 residues long: Putative S-adenosyl-L-methionine-dependent methyltransferase MSMEG_1479/MSMEI_1443 (303 aa).

S-adenosyl-L-methionine is bound by residues aspartate 130 and 159–160 (DL).

Belongs to the UPF0677 family.

Its function is as follows. Exhibits S-adenosyl-L-methionine-dependent methyltransferase activity. The protein is Putative S-adenosyl-L-methionine-dependent methyltransferase MSMEG_1479/MSMEI_1443 of Mycolicibacterium smegmatis (strain ATCC 700084 / mc(2)155) (Mycobacterium smegmatis).